We begin with the raw amino-acid sequence, 513 residues long: ATP synthase subunit alpha (513 aa).

169–176 (GDRQCGKT) is an ATP binding site.

Belongs to the ATPase alpha/beta chains family. In terms of assembly, F-type ATPases have 2 components, CF(1) - the catalytic core - and CF(0) - the membrane proton channel. CF(1) has five subunits: alpha(3), beta(3), gamma(1), delta(1), epsilon(1). CF(0) has three main subunits: a(1), b(2) and c(9-12). The alpha and beta chains form an alternating ring which encloses part of the gamma chain. CF(1) is attached to CF(0) by a central stalk formed by the gamma and epsilon chains, while a peripheral stalk is formed by the delta and b chains.

Its subcellular location is the cell inner membrane. The enzyme catalyses ATP + H2O + 4 H(+)(in) = ADP + phosphate + 5 H(+)(out). Produces ATP from ADP in the presence of a proton gradient across the membrane. The alpha chain is a regulatory subunit. In Burkholderia ambifaria (strain MC40-6), this protein is ATP synthase subunit alpha.